The following is a 276-amino-acid chain: Octanoyltransferase LipM (276 aa).

One can recognise a BPL/LPL catalytic domain in the interval 31–246; sequence GKVPPTVRFY…GFASGLEVEL (216 aa). The active-site Acyl-thioester intermediate is the Cys-148.

The protein belongs to the octanoyltransferase LipM family. In terms of assembly, monomer.

It carries out the reaction octanoyl-[ACP] + L-lysyl-[protein] = N(6)-octanoyl-L-lysyl-[protein] + holo-[ACP] + H(+). Its pathway is protein modification; protein lipoylation via endogenous pathway; protein N(6)-(lipoyl)lysine from octanoyl-[acyl-carrier-protein]. Functionally, catalyzes the transfer of endogenously produced octanoic acid from octanoyl-acyl-carrier-protein onto the lipoyl domain of GcvH, an intermediate carrier during protein lipoylation. This chain is Octanoyltransferase LipM, found in Brevibacillus brevis (strain 47 / JCM 6285 / NBRC 100599).